The following is a 129-amino-acid chain: Small ribosomal subunit protein uS11 (129 aa).

It belongs to the universal ribosomal protein uS11 family. As to quaternary structure, part of the 30S ribosomal subunit. Interacts with proteins S7 and S18. Binds to IF-3.

Functionally, located on the platform of the 30S subunit, it bridges several disparate RNA helices of the 16S rRNA. Forms part of the Shine-Dalgarno cleft in the 70S ribosome. The chain is Small ribosomal subunit protein uS11 from Rhodopseudomonas palustris (strain BisB18).